We begin with the raw amino-acid sequence, 1122 residues long: Telomerase reverse transcriptase (1122 aa).

The segment at 1–239 is RNA-interacting domain 1; it reads MTRAPRCPAV…TKRHLSLTST (239 aa). The GQ motif stretch occupies residues 58–205; that stretch reads MHWGSQPPPA…RPVGRNFTNL (148 aa). The tract at residues 137–141 is required for regulating specificity for telomeric DNA and for processivity for primer elongation; that stretch reads WMLLL. Residues 213 to 296 are disordered; sequence SSSRQEAPKP…KDLSSKGKVS (84 aa). The interval 240 to 328 is linker; the sequence is SVPSAKKARC…PRQNAFQLRP (89 aa). The segment covering 284 to 295 has biased composition (basic and acidic residues); the sequence is TAEKDLSSKGKV. A required for oligomerization region spans residues 306 to 528; it reads CKHKPSSTSL…VPAAEHRLRE (223 aa). Positions 329–540 are RNA-interacting domain 2; it reads FIETRHFLYS…LATFLFWLMD (212 aa). A TFLY; involved in RNA binding motif is present at residues 332–337; it reads TRHFLY. The tract at residues 381-511 is QFP motif; sequence LCRTHRLSRR…MKVEDCHWLR (131 aa). Residues 402 to 422 are CP motif; it reads LVNHAECQYVRLLRSHCRFRT. Position 447 is a phosphoserine; by DYRK2 (Ser-447). The Reverse transcriptase domain occupies 595 to 928; the sequence is EVRHHQDTWL…CLFPWCGLLL (334 aa). Tyr-697 carries the post-translational modification Phosphotyrosine; by SRC-type Tyr-kinases. The Mg(2+) site is built by Asp-702, Asp-861, and Asp-862. Residues 907–921 form a required for oligomerization region; sequence LGGAAPYQLPAHCLF. Positions 923 to 927 are primer grip sequence; the sequence is WCGLL. Residues 929-1122 are CTE; sequence DTQTLEVFCD…LSTDFQTILD (194 aa).

Belongs to the reverse transcriptase family. Telomerase subfamily. Catalytic component of the telomerase holoenzyme complex composed of one molecule of TERT, one molecule of WRAP53/TCAB1, two molecules of H/ACA ribonucleoprotein complex subunits DKC1, NOP10, NHP2 and GAR1, and a telomerase RNA template component (TERC). The telomerase holoenzyme complex is associated with TEP1, SMG6/EST1A and POT1. The molecular chaperone HSP90/P23 complex is required for correct assembly and stabilization of the active telomerase. Interacts directly with HSP90A and PTGES3. Interacts with HSPA1A; the interaction occurs in the absence of TERC and dissociates once the complex has formed. Interacts with RAN; the interaction promotes nuclear export of TERT. Interacts with XPO1. Interacts with PTPN11; the interaction retains TERT in the nucleus. Interacts with NCL (via RRM1 and C-terminal RRM4/Arg/Gly-rich domains); the interaction is important for nucleolar localization of TERT. Interacts with SMARCA4 (via the bromodomain); the interaction regulates Wnt-mediated signaling. Interacts with MCRS1 (isoform MCRS2); the interaction inhibits in vitro telomerase activity. Interacts with PIF1; the interaction has no effect on the elongation activity of TERT. Interacts with PML; the interaction recruits TERT to PML bodies and inhibits telomerase activity. Interacts with GNL3L. Interacts with isoform 1 and isoform 2 of NVL. Interacts with DHX36. Interacts with ATF7. In terms of processing, phosphorylation at Tyr-697 under oxidative stress leads to translocation of TERT to the cytoplasm and reduces its antiapoptotic activity. Dephosphorylated by SHP2/PTPN11 leading to nuclear retention. Phosphorylation by the AKT pathway promotes nuclear location. Phosphorylation at the G2/M phase at Ser-447 by DYRK2 promotes ubiquitination by the EDVP complex and degradation. Ubiquitinated by the EDVP complex, a E3 ligase complex following phosphorylation at Ser-447 by DYRK2. Ubiquitinated leads to proteasomal degradation. In terms of tissue distribution, high activity in intestine, liver and testis, moderate in lung, very low in muscle, heart and brain.

It is found in the nucleus. Its subcellular location is the nucleolus. The protein localises to the nucleoplasm. It localises to the chromosome. The protein resides in the telomere. It is found in the cytoplasm. Its subcellular location is the PML body. The enzyme catalyses DNA(n) + a 2'-deoxyribonucleoside 5'-triphosphate = DNA(n+1) + diphosphate. Functionally, telomerase is a ribonucleoprotein enzyme essential for the replication of chromosome termini in most eukaryotes. Active in progenitor and cancer cells. Inactive, or very low activity, in normal somatic cells. Catalytic component of the teleromerase holoenzyme complex whose main activity is the elongation of telomeres by acting as a reverse transcriptase that adds simple sequence repeats to chromosome ends by copying a template sequence within the RNA component of the enzyme. Catalyzes the RNA-dependent extension of 3'-chromosomal termini with the 6-nucleotide telomeric repeat unit, 5'-TTAGGG-3'. The catalytic cycle involves primer binding, primer extension and release of product once the template boundary has been reached or nascent product translocation followed by further extension. More active on substrates containing 2 or 3 telomeric repeats. Telomerase activity is regulated by a number of factors including telomerase complex-associated proteins, chaperones and polypeptide modifiers. Modulates Wnt signaling. Plays important roles in aging and antiapoptosis. The chain is Telomerase reverse transcriptase (Tert) from Mus musculus (Mouse).